Reading from the N-terminus, the 187-residue chain is Ribosome-recycling factor (187 aa).

The protein belongs to the RRF family.

The protein localises to the cytoplasm. Functionally, responsible for the release of ribosomes from messenger RNA at the termination of protein biosynthesis. May increase the efficiency of translation by recycling ribosomes from one round of translation to another. The sequence is that of Ribosome-recycling factor from Parabacteroides distasonis (strain ATCC 8503 / DSM 20701 / CIP 104284 / JCM 5825 / NCTC 11152).